The primary structure comprises 971 residues: Oncostatin-M-specific receptor subunit beta (971 aa).

Positions 1–23 (MAFSVVLHPAFLLAVLSLRASRS) are cleaved as a signal peptide. Topologically, residues 24 to 737 (EVLEEPLPLT…VTTPDARSHM (714 aa)) are extracellular. Residues N74, N97, N130, N162, and N239 are each glycosylated (N-linked (GlcNAc...) asparagine). Residues C242 and C252 are joined by a disulfide bond. N-linked (GlcNAc...) asparagine glycans are attached at residues N271, N304, N323, and N377. Fibronectin type-III domains follow at residues 332-425 (APQD…TPET), 427-523 (PSQA…SNDS), 524-620 (GHEE…TQEL), and 622-733 (PLVN…TPDA). A WSXWS motif motif is present at residues 412–416 (WSDWT). N-linked (GlcNAc...) asparagine glycosylation is found at N491, N541, N577, N689, and N722. A helical transmembrane segment spans residues 738 to 758 (LLQIILPMTLCVLLSIIVCYW). At 759–971 (KSQWVKEKCY…STVLLGQGEQ (213 aa)) the chain is on the cytoplasmic side. Positions 767–775 (CYPDIPNPY) match the Box 1 motif motif. The tract at residues 949–971 (LASPSLKEDNSLTSTVLLGQGEQ) is disordered. Polar residues predominate over residues 959–971 (SLTSTVLLGQGEQ).

The protein belongs to the type I cytokine receptor family. Type 2 subfamily. In terms of assembly, heterodimer composed of OSMR and IL6ST (type II OSM receptor). Heterodimer with IL31RA to form the IL31 receptor. Widely expressed. Expressed at highest levels in the lung, heart, thymus and spleen. Expressed in dorsal root ganglia.

The protein localises to the membrane. Its function is as follows. Associates with IL31RA to form the IL31 receptor. Binds IL31 to activate STAT3 and possibly STAT1 and STAT5. Capable of transducing OSM-specific signaling events. In Mus musculus (Mouse), this protein is Oncostatin-M-specific receptor subunit beta (Osmr).